Reading from the N-terminus, the 102-residue chain is Large ribosomal subunit protein bL21 (102 aa).

A compositionally biased stretch (basic residues) spans 80–91 (KNSKRKKGHRQP). The segment at 80–102 (KNSKRKKGHRQPYTKLTIDKINA) is disordered.

This sequence belongs to the bacterial ribosomal protein bL21 family. In terms of assembly, part of the 50S ribosomal subunit. Contacts protein L20.

In terms of biological role, this protein binds to 23S rRNA in the presence of protein L20. The polypeptide is Large ribosomal subunit protein bL21 (Staphylococcus aureus (strain Mu3 / ATCC 700698)).